The chain runs to 226 residues: Clarin-3 (226 aa).

The helical transmembrane segment at 8 to 28 (LMFLSSFFTSLGSFIVICSIL) threads the bilayer. The N-linked (GlcNAc...) asparagine glycan is linked to Asn-83. Helical transmembrane passes span 92–112 (VTIL…GFTF), 129–149 (VYTW…LFVA), and 181–201 (FWLI…IIFY).

The protein belongs to the clarin family.

It localises to the membrane. The sequence is that of Clarin-3 (CLRN3) from Homo sapiens (Human).